A 353-amino-acid polypeptide reads, in one-letter code: NADH-quinone oxidoreductase subunit H (353 aa).

The next 9 membrane-spanning stretches (helical) occupy residues 8 to 28, 75 to 95, 108 to 128, 148 to 168, 179 to 199, 229 to 249, 258 to 278, 297 to 317, and 319 to 339; these read LLVY…IFIW, GVFW…FAAI, IGIL…FMAG, VSYE…TGSL, VPFI…AMAE, LFYL…TTLF, LHPV…IIWV, FLLP…LIAP, and INTA…VLLF.

Belongs to the complex I subunit 1 family. NDH-1 is composed of 14 different subunits. Subunits NuoA, H, J, K, L, M, N constitute the membrane sector of the complex.

The protein localises to the cell membrane. The catalysed reaction is a quinone + NADH + 5 H(+)(in) = a quinol + NAD(+) + 4 H(+)(out). NDH-1 shuttles electrons from NADH, via FMN and iron-sulfur (Fe-S) centers, to quinones in the respiratory chain. The immediate electron acceptor for the enzyme in this species is believed to be ubiquinone. Couples the redox reaction to proton translocation (for every two electrons transferred, four hydrogen ions are translocated across the cytoplasmic membrane), and thus conserves the redox energy in a proton gradient. This subunit may bind ubiquinone. The sequence is that of NADH-quinone oxidoreductase subunit H from Dehalococcoides mccartyi (strain CBDB1).